Here is a 297-residue protein sequence, read N- to C-terminus: uncharacterized protein (297 aa).

Residues 128 to 156 adopt a coiled-coil conformation; it reads RGVIVEQESEAAAEKDELESLAKVLESDF.

This is an uncharacterized protein from Bacillus subtilis (strain 168).